A 184-amino-acid polypeptide reads, in one-letter code: Adenine phosphoribosyltransferase (184 aa).

It belongs to the purine/pyrimidine phosphoribosyltransferase family. As to quaternary structure, homodimer.

The protein resides in the cytoplasm. It catalyses the reaction AMP + diphosphate = 5-phospho-alpha-D-ribose 1-diphosphate + adenine. Its pathway is purine metabolism; AMP biosynthesis via salvage pathway; AMP from adenine: step 1/1. In terms of biological role, catalyzes a salvage reaction resulting in the formation of AMP, that is energically less costly than de novo synthesis. The chain is Adenine phosphoribosyltransferase from Shewanella baltica (strain OS223).